The following is a 326-amino-acid chain: MELSGATMARGLAVLLVLFLHIKNLPAQAADTCPEVKVVGLEGSDKLTILRGCPGLPGAPGPKGEAGVIGERGERGLPGAPGKAGPVGPKGDRGEKGMRGEKGDAGQSQSCATGPRNCKDLLDRGYFLSGWHTIYLPDCRPLTVLCDMDTDGGGWTVFQRRMDGSVDFYRDWAAYKQGFGSQLGEFWLGNDNIHALTAQGSSELRVDLVDFEGNHQFAKYKSFKVADEAEKYKLVLGAFVGGSAGNSLTGHNNNFFSTKDQDNDVSSSNCAEKFQGAWWYADCHASNLNGLYLMGPHESYANGINWSAAKGYKYSYKVSEMKVRPA.

The signal sequence occupies residues methionine 1 to alanine 29. The Collagen-like domain maps to glycine 55–arginine 93. A disordered region spans residues arginine 72 to cysteine 111. The segment covering leucine 77–proline 89 has biased composition (low complexity). Basic and acidic residues predominate over residues lysine 90 to aspartate 104. The region spanning glutamine 109–alanine 326 is the Fibrinogen C-terminal domain. Intrachain disulfides connect cysteine 111–cysteine 139 and cysteine 118–cysteine 146. An a domain; contributes to trimerization region spans residues proline 115–glycine 154. The tract at residues tryptophan 155–serine 243 is b domain; contributes to trimerization. Ca(2+)-binding residues include aspartate 262, aspartate 264, serine 266, and serine 268. The cysteines at positions 270 and 283 are disulfide-linked. Residue aspartate 282–histidine 284 coordinates a carbohydrate. A glycan (N-linked (GlcNAc...) asparagine) is linked at asparagine 305. Residues lysine 317–alanine 326 are p domain.

It belongs to the ficolin lectin family. As to quaternary structure, homotrimer. Interacts with elastin/ELN. Interacts (via Fibrinogen C-terminal domain) with FFAR2. Interacts with CRP; may regulate monocyte activation by FCN1. Peripheral blood leukocytes, monocytes and granulocytes. Also detected in spleen, lung, and thymus, may be due to the presence of tissue macrophages or trapped blood in these tissues. Not detected on lymphocytes.

The protein localises to the secreted. Its subcellular location is the cell membrane. In terms of biological role, extracellular lectin functioning as a pattern-recognition receptor in innate immunity. Binds the sugar moieties of pathogen-associated molecular patterns (PAMPs) displayed on microbes and activates the lectin pathway of the complement system. May also activate monocytes through a G protein-coupled receptor, FFAR2, inducing the secretion of interleukin-8/IL-8. Binds preferentially to 9-O-acetylated 2-6-linked sialic acid derivatives and to various glycans containing sialic acid engaged in a 2-3 linkage. The polypeptide is Ficolin-1 (FCN1) (Homo sapiens (Human)).